A 194-amino-acid polypeptide reads, in one-letter code: GTP cyclohydrolase 1 (194 aa).

Zn(2+)-binding residues include Cys85, His88, and Cys156.

Belongs to the GTP cyclohydrolase I family. Toroid-shaped homodecamer, composed of two pentamers of five dimers.

The enzyme catalyses GTP + H2O = 7,8-dihydroneopterin 3'-triphosphate + formate + H(+). It functions in the pathway cofactor biosynthesis; 7,8-dihydroneopterin triphosphate biosynthesis; 7,8-dihydroneopterin triphosphate from GTP: step 1/1. The sequence is that of GTP cyclohydrolase 1 from Bacteroides fragilis (strain YCH46).